A 570-amino-acid polypeptide reads, in one-letter code: Glycine--tRNA ligase (570 aa).

Substrate contacts are provided by R95 and E159. ATP is bound by residues R191–E193, I201–F206, E312–V313, and G426–R429. F206–E210 contacts substrate. Position 422 to 426 (E422 to G426) interacts with substrate.

It belongs to the class-II aminoacyl-tRNA synthetase family.

The protein localises to the cytoplasm. The catalysed reaction is tRNA(Gly) + glycine + ATP = glycyl-tRNA(Gly) + AMP + diphosphate. In terms of biological role, catalyzes the attachment of glycine to tRNA(Gly). This chain is Glycine--tRNA ligase, found in Archaeoglobus fulgidus (strain ATCC 49558 / DSM 4304 / JCM 9628 / NBRC 100126 / VC-16).